Here is a 2193-residue protein sequence, read N- to C-terminus: Non-reducing polyketide synthase esdpA (2193 aa).

The region spanning 90–252 (NVLLAPLTVL…AKVQVNGRYH (163 aa)) is the Starter acyltransferase (SAT) domain. The Ketosynthase family 3 (KS3) domain occupies 381–797 (DECVAIVGAA…GNNTVIIVCE (417 aa)). Catalysis depends on for beta-ketoacyl synthase activity residues C546, H682, and H720. The region spanning 906–1158 (VFSGQSGMTV…YFVDAVRRIK (253 aa)) is the Malonyl-CoA:ACP transacylase (MAT) domain. S992 (for acyl/malonyl transferase activity) is an active-site residue. An N-terminal hotdog fold region spans residues 1265 to 1392 (PPMLSLENFS…GRVVLEDRRR (128 aa)). The PKS/mFAS DH domain occupies 1265–1569 (PPMLSLENFS…FVKISSHILQ (305 aa)). The interval 1419-1569 (VFSASGSIAY…FVKISSHILQ (151 aa)) is C-terminal hotdog fold. D1479 serves as the catalytic Proton donor; for dehydratase activity. The region spanning 1723–1799 (RILSDSMIKL…ELHDLMQSHP (77 aa)) is the Carrier domain. O-(pantetheine 4'-phosphoryl)serine is present on S1759. The interval 1944-2177 (YHGSEHKLLR…GFTHVDWSND (234 aa)) is methyltransferase (CMeT) domain.

Pantetheine 4'-phosphate is required as a cofactor.

It functions in the pathway secondary metabolite biosynthesis; terpenoid biosynthesis. In terms of biological role, non-reducing polyketide synthase; part of the cluster that mediates the biosynthesis of shearones, diterpenoid pyrones (DPs) which are structurally diverse meroterpenoids consisting of a diterpene linked by a pyrone, and which may exhibit a range of bioactivities. Whitin the pathway, esdpA takes part to the biosynthesis of the molecular scaffold via the production of the alpha-pyrone from one molecule of acetyl-CoA, two molecules of malonyl-CoA and one molecule of S-adenosyl-L-methionine (SAM). The molecular scaffold is commonly biosynthesized by a series of enzymes including the non-reducing polyketide synthase (NR-PKS) esdpA that generates an alpha-pyrone; the prenyltransferase esdpC that attaches a geranylgeranyl pyrophosphate (GGPP) produced by the GGPP synthase (GGPPS) esdpD onto the pyrone unit; the FAD-dependent monooxygenase esdpE that converts an olefin on the diterpene unit into an epoxide; and the terpene cyclase esdpB that catalyzes the cyclization reactions to give the molecular backbone shearone A. In the modification steps, esdpF oxidizes the hydroxy group to a ketone at C-3 and esdpG then attaches hydroxy groups at both C-11 and C-12. After that, esdpI hydroxylates at C-20 and esdpH hydroxylates at C-6'. The ether bridge is generated by nucleophilic attack of the hydroxy group at C-20 to the carbonyl carbon at C-3. EsdpH can also functions prior to esdpI. The different combinations of these modification enzymes lead to the production of diverse shearone derivatives, shearone I being the end product of the pathway. The alpha-ketoglutarate-dependent dioxygenase esdpJ seems not to be involved in this pathway. In Penicillium shearii (Eupenicillium shearii), this protein is Non-reducing polyketide synthase esdpA.